Consider the following 386-residue polypeptide: Cell division protein FtsZ (386 aa).

GTP contacts are provided by residues 21-25, 108-110, glutamate 139, arginine 143, and asparagine 187; these read GGGGN and GTG.

The protein belongs to the FtsZ family. In terms of assembly, homodimer. Polymerizes to form a dynamic ring structure in a strictly GTP-dependent manner. Interacts directly with several other division proteins.

It localises to the cytoplasm. Its function is as follows. Essential cell division protein that forms a contractile ring structure (Z ring) at the future cell division site. The regulation of the ring assembly controls the timing and the location of cell division. One of the functions of the FtsZ ring is to recruit other cell division proteins to the septum to produce a new cell wall between the dividing cells. Binds GTP and shows GTPase activity. This Coxiella burnetii (strain RSA 493 / Nine Mile phase I) protein is Cell division protein FtsZ.